The chain runs to 453 residues: Putative dipeptidase UREG_03382 (453 aa).

The interval 1 to 33 (MSTRDHVKQSPMPVQEGYPRSSKEFSPPSSRSR) is disordered. A helical membrane pass occupies residues 41-63 (LTMSLLIAAGAATFSKYIFPLGS). Zn(2+)-binding residues include His95, Asp97, and Glu208. A disulfide bridge links Cys147 with Cys223. His221 is a substrate binding site. Residues His265 and His286 each coordinate Zn(2+). Substrate-binding residues include Arg297 and Asp357. N-linked (GlcNAc...) asparagine glycans are attached at residues Asn370 and Asn443.

It belongs to the metallo-dependent hydrolases superfamily. Peptidase M19 family. The cofactor is Zn(2+).

Its subcellular location is the membrane. It catalyses the reaction an L-aminoacyl-L-amino acid + H2O = 2 an L-alpha-amino acid. In terms of biological role, hydrolyzes a wide range of dipeptides. The polypeptide is Putative dipeptidase UREG_03382 (Uncinocarpus reesii (strain UAMH 1704)).